We begin with the raw amino-acid sequence, 502 residues long: Histidine--tRNA ligase (502 aa).

This sequence belongs to the class-II aminoacyl-tRNA synthetase family. As to quaternary structure, homodimer.

The protein localises to the cytoplasm. The catalysed reaction is tRNA(His) + L-histidine + ATP = L-histidyl-tRNA(His) + AMP + diphosphate + H(+). This chain is Histidine--tRNA ligase (hisS), found in Brucella suis biovar 1 (strain 1330).